The chain runs to 51 residues: Large ribosomal subunit protein bL33 (51 aa).

This sequence belongs to the bacterial ribosomal protein bL33 family. Part of the 50S ribosomal subunit. Cross-links to the P and E site tRNAs.

The polypeptide is Large ribosomal subunit protein bL33 (Pseudomonas aeruginosa (strain ATCC 15692 / DSM 22644 / CIP 104116 / JCM 14847 / LMG 12228 / 1C / PRS 101 / PAO1)).